The chain runs to 335 residues: 4-hydroxythreonine-4-phosphate dehydrogenase (335 aa).

Substrate is bound at residue Thr-132. A divalent metal cation-binding residues include His-163, His-208, and His-263. Substrate contacts are provided by Lys-271, Asn-280, and Arg-289.

Belongs to the PdxA family. As to quaternary structure, homodimer. Requires Zn(2+) as cofactor. The cofactor is Mg(2+). Co(2+) serves as cofactor.

The protein resides in the cytoplasm. It catalyses the reaction 4-(phosphooxy)-L-threonine + NAD(+) = 3-amino-2-oxopropyl phosphate + CO2 + NADH. It functions in the pathway cofactor biosynthesis; pyridoxine 5'-phosphate biosynthesis; pyridoxine 5'-phosphate from D-erythrose 4-phosphate: step 4/5. In terms of biological role, catalyzes the NAD(P)-dependent oxidation of 4-(phosphooxy)-L-threonine (HTP) into 2-amino-3-oxo-4-(phosphooxy)butyric acid which spontaneously decarboxylates to form 3-amino-2-oxopropyl phosphate (AHAP). The chain is 4-hydroxythreonine-4-phosphate dehydrogenase from Zymomonas mobilis subsp. mobilis (strain ATCC 31821 / ZM4 / CP4).